Consider the following 159-residue polypeptide: Phosphopantetheine adenylyltransferase (159 aa).

Thr-10 lines the substrate pocket. Residues 10–11 (TF) and His-18 contribute to the ATP site. The substrate site is built by Lys-42, Met-74, and Arg-88. Residues 89-91 (GLR), Glu-99, and 124-130 (WSFISSS) contribute to the ATP site.

This sequence belongs to the bacterial CoaD family. Homohexamer. It depends on Mg(2+) as a cofactor.

The protein localises to the cytoplasm. It catalyses the reaction (R)-4'-phosphopantetheine + ATP + H(+) = 3'-dephospho-CoA + diphosphate. The protein operates within cofactor biosynthesis; coenzyme A biosynthesis; CoA from (R)-pantothenate: step 4/5. In terms of biological role, reversibly transfers an adenylyl group from ATP to 4'-phosphopantetheine, yielding dephospho-CoA (dPCoA) and pyrophosphate. This Pectobacterium carotovorum subsp. carotovorum (strain PC1) protein is Phosphopantetheine adenylyltransferase.